The chain runs to 375 residues: Chaperone protein DnaJ (375 aa).

Residues 5-70 (DYYEVLGVNR…RKRASYDQFG (66 aa)) form the J domain. The CR-type zinc finger occupies 133 to 211 (GLSRTIKVPT…CHGQGRQQQT (79 aa)). Cysteine 146, cysteine 149, cysteine 163, cysteine 166, cysteine 185, cysteine 188, cysteine 199, and cysteine 202 together coordinate Zn(2+). 4 CXXCXGXG motif repeats span residues 146-153 (CKTCNGSG), 163-170 (CPRCNGSG), 185-192 (CSVCRGRG), and 199-206 (CTDCHGQG).

Belongs to the DnaJ family. As to quaternary structure, homodimer. Zn(2+) is required as a cofactor.

The protein resides in the cytoplasm. In terms of biological role, participates actively in the response to hyperosmotic and heat shock by preventing the aggregation of stress-denatured proteins and by disaggregating proteins, also in an autonomous, DnaK-independent fashion. Unfolded proteins bind initially to DnaJ; upon interaction with the DnaJ-bound protein, DnaK hydrolyzes its bound ATP, resulting in the formation of a stable complex. GrpE releases ADP from DnaK; ATP binding to DnaK triggers the release of the substrate protein, thus completing the reaction cycle. Several rounds of ATP-dependent interactions between DnaJ, DnaK and GrpE are required for fully efficient folding. Also involved, together with DnaK and GrpE, in the DNA replication of plasmids through activation of initiation proteins. This chain is Chaperone protein DnaJ, found in Coxiella burnetii (strain CbuK_Q154) (Coxiella burnetii (strain Q154)).